Consider the following 525-residue polypeptide: GMP synthase [glutamine-hydrolyzing] (525 aa).

Residues 9 to 207 form the Glutamine amidotransferase type-1 domain; it reads RILILDFGSQ…VRDICQCEAL (199 aa). Cys86 (nucleophile) is an active-site residue. Active-site residues include His181 and Glu183. Residues 208–400 enclose the GMPS ATP-PPase domain; it reads WTPAKIIDDA…LGLPYDMLYR (193 aa). Residue 235–241 coordinates ATP; the sequence is SGGVDSS.

In terms of assembly, homodimer.

It catalyses the reaction XMP + L-glutamine + ATP + H2O = GMP + L-glutamate + AMP + diphosphate + 2 H(+). It functions in the pathway purine metabolism; GMP biosynthesis; GMP from XMP (L-Gln route): step 1/1. Catalyzes the synthesis of GMP from XMP. The sequence is that of GMP synthase [glutamine-hydrolyzing] from Citrobacter koseri (strain ATCC BAA-895 / CDC 4225-83 / SGSC4696).